The following is a 208-amino-acid chain: Uracil phosphoribosyltransferase (208 aa).

5-phospho-alpha-D-ribose 1-diphosphate-binding positions include arginine 78, arginine 103, and 130–138 (DPMLATGGS). Residues isoleucine 193 and 198 to 200 (GDA) each bind uracil. Aspartate 199 is a 5-phospho-alpha-D-ribose 1-diphosphate binding site.

It belongs to the UPRTase family. Requires Mg(2+) as cofactor.

It catalyses the reaction UMP + diphosphate = 5-phospho-alpha-D-ribose 1-diphosphate + uracil. It participates in pyrimidine metabolism; UMP biosynthesis via salvage pathway; UMP from uracil: step 1/1. With respect to regulation, allosterically activated by GTP. Catalyzes the conversion of uracil and 5-phospho-alpha-D-ribose 1-diphosphate (PRPP) to UMP and diphosphate. The chain is Uracil phosphoribosyltransferase from Desulfovibrio desulfuricans (strain ATCC 27774 / DSM 6949 / MB).